The primary structure comprises 409 residues: 4-hydroxy-3-methylbut-2-en-1-yl diphosphate synthase (flavodoxin) (409 aa).

4 residues coordinate [4Fe-4S] cluster: Cys298, Cys301, Cys344, and Glu351.

This sequence belongs to the IspG family. [4Fe-4S] cluster is required as a cofactor.

It catalyses the reaction (2E)-4-hydroxy-3-methylbut-2-enyl diphosphate + oxidized [flavodoxin] + H2O + 2 H(+) = 2-C-methyl-D-erythritol 2,4-cyclic diphosphate + reduced [flavodoxin]. Its pathway is isoprenoid biosynthesis; isopentenyl diphosphate biosynthesis via DXP pathway; isopentenyl diphosphate from 1-deoxy-D-xylulose 5-phosphate: step 5/6. Its function is as follows. Converts 2C-methyl-D-erythritol 2,4-cyclodiphosphate (ME-2,4cPP) into 1-hydroxy-2-methyl-2-(E)-butenyl 4-diphosphate. The chain is 4-hydroxy-3-methylbut-2-en-1-yl diphosphate synthase (flavodoxin) from Dechloromonas aromatica (strain RCB).